The sequence spans 97 residues: MEARDIIIRPVITEKSMNLMSERKYTFIVDKRANKIQIKKAVEDIFGVKVDKVYTMNYKGKPKRMGKYEGRTEAYKKAIVKLTPDSKGIEFFEGLQA.

Belongs to the universal ribosomal protein uL23 family. In terms of assembly, part of the 50S ribosomal subunit. Contacts protein L29, and trigger factor when it is bound to the ribosome.

Functionally, one of the early assembly proteins it binds 23S rRNA. One of the proteins that surrounds the polypeptide exit tunnel on the outside of the ribosome. Forms the main docking site for trigger factor binding to the ribosome. The sequence is that of Large ribosomal subunit protein uL23 from Thermoanaerobacter pseudethanolicus (strain ATCC 33223 / 39E) (Clostridium thermohydrosulfuricum).